A 166-amino-acid polypeptide reads, in one-letter code: MASGVTVNDEVIKVFNDMKVRKSSTQEEIKKRKKAVLFCLSDDKRQIIVEEAKQILVGDIGDTVEDPYTSFVKLLPLNDCRYALYDATYETKESKKEDLVFIFWAPESAPLKSKMIYASSKDAIKKKFTGIKHEWQVNGLDDIKDRSTLGEKLGGSVVVSLEGKPL.

At Ala-2 the chain carries N-acetylalanine. Ser-3 carries the post-translational modification Phosphoserine. Residues 4–153 enclose the ADF-H domain; sequence GVTVNDEVIK…KDRSTLGEKL (150 aa). Thr-6 is modified (phosphothreonine). Residues 30 to 34 carry the Nuclear localization signal motif; the sequence is KKRKK.

It belongs to the actin-binding proteins ADF family. As to quaternary structure, interacts with CSRP3; possibly two molecules of CFL2 can interact with one molecule if CSRP3. The phosphorylation of Ser-24 may prevent recognition of the nuclear localization signal. In terms of tissue distribution, predominantly expressed in skeletal muscle.

It localises to the nucleus matrix. It is found in the cytoplasm. The protein resides in the cytoskeleton. In terms of biological role, controls reversibly actin polymerization and depolymerization in a pH-sensitive manner. It has the ability to bind G- and F-actin in a 1:1 ratio of cofilin to actin. It is the major component of intranuclear and cytoplasmic actin rods. Required for muscle maintenance. May play a role during the exchange of alpha-actin forms during the early postnatal remodeling of the sarcomere. The sequence is that of Cofilin-2 (Cfl2) from Mus musculus (Mouse).